The primary structure comprises 239 residues: Ribosomal RNA small subunit methyltransferase G (239 aa).

S-adenosyl-L-methionine-binding positions include G77, F82, 128–129, and R147; that span reads AE. Positions 215-239 are disordered; the sequence is IRKTKSTPKKYPRKPGTPNKSPIEG. Positions 216–227 are enriched in basic residues; sequence RKTKSTPKKYPR.

The protein belongs to the methyltransferase superfamily. RNA methyltransferase RsmG family.

It localises to the cytoplasm. Its function is as follows. Specifically methylates the N7 position of guanine in position 535 of 16S rRNA. In Bacillus velezensis (strain DSM 23117 / BGSC 10A6 / LMG 26770 / FZB42) (Bacillus amyloliquefaciens subsp. plantarum), this protein is Ribosomal RNA small subunit methyltransferase G.